The primary structure comprises 132 residues: Protein p15 (132 aa).

Its function is as follows. May play a role in infectivity. The protein is Protein p15 of Panicum mosaic virus (strain United States/Kansas 109S) (PMV).